The chain runs to 473 residues: MALQTREARTLAEKVWDDHVVVSGRNEAPDLIYIDLHLVHEVTSPQAFDGLRLAGRPVRRPDLTIATEDHNVPTVDIDKPIADPVSRTQVETLRRNCAEFGIRLHPMGDVEQGIVHVVGPQLGLTQPGMTIVCGDSHTSTHGAFGALAMGIGTSEVEHVLATQTLPLRPFKTMAVNVDGRLPAGVSAKDIILALIAKIGTGGGQGHVIEYRGSAIESLSMEGRMTICNMSIEAGARAGMVAPDETTYEYLRNRPHAPTGAQWDAALGYWQQLRTDPGAVFDTEVHLDAAELSPFVTWGTNPGQGVPLCATVPDPELIGDDGERQAAEKALAYMDLEPGKAMRDIAVDAVFVGSCTNGRIEDLRVVAEVLRGRKVAPGVRMLIVPGSMRVRAQAEKEGLGEVFTVAGAEWRQAGCSMCLGMNPDQLAPGERCAATSNRNFEGRQGKGGRTHLVSPAVAAATAVRGTLSAPADLN.

[4Fe-4S] cluster is bound by residues cysteine 354, cysteine 414, and cysteine 417.

This sequence belongs to the aconitase/IPM isomerase family. LeuC type 1 subfamily. Heterodimer of LeuC and LeuD. [4Fe-4S] cluster is required as a cofactor.

It catalyses the reaction (2R,3S)-3-isopropylmalate = (2S)-2-isopropylmalate. Its pathway is amino-acid biosynthesis; L-leucine biosynthesis; L-leucine from 3-methyl-2-oxobutanoate: step 2/4. Its function is as follows. Catalyzes the isomerization between 2-isopropylmalate and 3-isopropylmalate, via the formation of 2-isopropylmaleate. The polypeptide is 3-isopropylmalate dehydratase large subunit (Mycobacterium marinum (strain ATCC BAA-535 / M)).